The sequence spans 270 residues: MPELPEVETTRQGIAPHCEGQTIQRVIVRNPSLRWPVPADLAEHLEGKTIRAVERRAKYLFLHLETGSVIVHLGMSGSLRVITDDSPAMTHDHVELVLGNHRRLRFNDPRRFGCWLWTTDWNRHPLISALGPEPLSEDFNGAWLFRLSRQKQTPVKSFIMDNHVVVGVGNIYANEALFKAGIHPKRKAGRISLDRYHKLAEAIRETLSAAILMGGTTLRDFVNSDGKPGYFAQSLLVYGKAGAPCTECNTPLKEIRMNNRSTVYCPRCQR.

Catalysis depends on P2, which acts as the Schiff-base intermediate with DNA. Residue E3 is the Proton donor of the active site. K58 functions as the Proton donor; for beta-elimination activity in the catalytic mechanism. 3 residues coordinate DNA: H91, R110, and K151. An FPG-type zinc finger spans residues 236 to 270; the sequence is LVYGKAGAPCTECNTPLKEIRMNNRSTVYCPRCQR. Residue R260 is the Proton donor; for delta-elimination activity of the active site.

It belongs to the FPG family. As to quaternary structure, monomer. Zn(2+) serves as cofactor.

It carries out the reaction Hydrolysis of DNA containing ring-opened 7-methylguanine residues, releasing 2,6-diamino-4-hydroxy-5-(N-methyl)formamidopyrimidine.. The enzyme catalyses 2'-deoxyribonucleotide-(2'-deoxyribose 5'-phosphate)-2'-deoxyribonucleotide-DNA = a 3'-end 2'-deoxyribonucleotide-(2,3-dehydro-2,3-deoxyribose 5'-phosphate)-DNA + a 5'-end 5'-phospho-2'-deoxyribonucleoside-DNA + H(+). Functionally, involved in base excision repair of DNA damaged by oxidation or by mutagenic agents. Acts as a DNA glycosylase that recognizes and removes damaged bases. Has a preference for oxidized purines, such as 7,8-dihydro-8-oxoguanine (8-oxoG). Has AP (apurinic/apyrimidinic) lyase activity and introduces nicks in the DNA strand. Cleaves the DNA backbone by beta-delta elimination to generate a single-strand break at the site of the removed base with both 3'- and 5'-phosphates. The polypeptide is Formamidopyrimidine-DNA glycosylase (Marinobacter nauticus (strain ATCC 700491 / DSM 11845 / VT8) (Marinobacter aquaeolei)).